Consider the following 559-residue polypeptide: Alkaline phosphatase PhoK (559 aa).

Residues 1–19 (MLKHVAAALLLATAMPVVA) form the signal peptide. Zn(2+) is bound by residues D49 and T89. Residue T89 is the Phosphothreonine intermediate of the active site. A disulfide bridge links C90 with C126. Residues N110 and 171–173 (KDR) contribute to the substrate site. A disulfide bridge links C231 with C314. D300, H304, D345, H346, and H491 together coordinate Zn(2+). Cysteines 545 and 556 form a disulfide.

Monomer. The cofactor is Zn(2+).

Its subcellular location is the secreted. It carries out the reaction a phosphate monoester + H2O = an alcohol + phosphate. Alkaline phosphatase with broad substrate specificity. Precipitates uranium from alkaline solutions. This chain is Alkaline phosphatase PhoK, found in Sphingomonas sp.